The chain runs to 432 residues: Alcohol acyltransferase 9 (432 aa).

Active-site proton acceptor residues include His156 and Asp379.

This sequence belongs to the plant acyltransferase family. Expressed in fruit.

It carries out the reaction 2-(methylsulfanyl)acetyl-CoA + butan-1-ol = butyl 2-(methylsulfanyl)acetate + CoA. The catalysed reaction is ethanol + acetyl-CoA = ethyl acetate + CoA. The enzyme catalyses butan-1-ol + acetyl-CoA = butyl acetate + CoA. It catalyses the reaction butan-1-ol + propanoyl-CoA = butyl propanoate + CoA. In terms of biological role, involved in the biosynthesis of volatile esters which confer kiwifruit flavor. Alcohol acyl transferase that can use a wide range of alcohols as substrate to produce esters. Exhibits acetyl-CoA:alcohol O-acyltransferase activity. This Actinidia deliciosa (Kiwi) protein is Alcohol acyltransferase 9.